Here is a 644-residue protein sequence, read N- to C-terminus: Exoribonuclease 2 (644 aa).

Positions 189-516 (REDLTALDFV…NHRLLKAVIK (328 aa)) constitute an RNB domain. An S1 motif domain is found at 561–643 (DTRFAAEIVD…ETRSIIARPV (83 aa)).

Belongs to the RNR ribonuclease family. RNase II subfamily.

It is found in the cytoplasm. It catalyses the reaction Exonucleolytic cleavage in the 3'- to 5'-direction to yield nucleoside 5'-phosphates.. In terms of biological role, involved in mRNA degradation. Hydrolyzes single-stranded polyribonucleotides processively in the 3' to 5' direction. The chain is Exoribonuclease 2 from Escherichia coli O45:K1 (strain S88 / ExPEC).